We begin with the raw amino-acid sequence, 702 residues long: Zinc finger CCCH domain-containing protein 62 (702 aa).

The segment at 1–77 is disordered; sequence MAAPAADDDD…SYDDPTFDPA (77 aa). Residues 18–54 show a composition bias toward acidic residues; that stretch reads EEDDGEEEEGSEEEVESDDEEEEEGEGYDWSEEDDPE. One can recognise an SAP domain in the interval 132 to 166; it reads LEKLKVYECKAYLRMHKLRLSGNKEVLLTRIRGQI. 4 disordered regions span residues 288 to 349, 405 to 532, 546 to 602, and 634 to 673; these read EKHA…NTVQ, SRTS…QQQP, GGTS…RETH, and QMSQDQYHHQQNHHQNYHGRQGMNGNQYHDRQNHNQNPQR. Over residues 298 to 325 the composition is skewed to basic and acidic residues; sequence KTREVRIKDKENERMRRLNRNKENKSKG. Polar residues-rich tracts occupy residues 326-349 and 405-419; these read QDNMNKKSSQAVFPQHTVTTNTVQ and SRTSTTQLINHQAPS. Residues 430-448 show a composition bias toward low complexity; that stretch reads QQQQQQQPPKSIKPAPIQQ. Polar residues-rich tracts occupy residues 472–502, 522–532, 546–565, and 575–591; these read SQEQRAAVSQTSAARQDFTNHQAPPSRQHGG, QQAVSYTQQQP, GGTSTSRTGFMDRQSNNWGS, and PFTQKAKTYQHGSNGSG. A C3H1-type zinc finger spans residues 674 to 702; the sequence is FRPWKPCFIYQQQGWCPYGENCKFMHDLR.

This chain is Zinc finger CCCH domain-containing protein 62, found in Oryza sativa subsp. japonica (Rice).